Consider the following 397-residue polypeptide: Beta sliding clamp (397 aa).

It belongs to the beta sliding clamp family. In terms of assembly, forms a ring-shaped head-to-tail homodimer around DNA which binds and tethers DNA polymerases and other proteins to the DNA. The DNA replisome complex has a single clamp-loading complex (3 tau and 1 each of delta, delta', psi and chi subunits) which binds 3 Pol III cores (1 core on the leading strand and 2 on the lagging strand) each with a beta sliding clamp dimer. Additional proteins in the replisome are other copies of gamma, psi and chi, Ssb, DNA helicase and RNA primase.

The protein localises to the cytoplasm. Confers DNA tethering and processivity to DNA polymerases and other proteins. Acts as a clamp, forming a ring around DNA (a reaction catalyzed by the clamp-loading complex) which diffuses in an ATP-independent manner freely and bidirectionally along dsDNA. Initially characterized for its ability to contact the catalytic subunit of DNA polymerase III (Pol III), a complex, multichain enzyme responsible for most of the replicative synthesis in bacteria; Pol III exhibits 3'-5' exonuclease proofreading activity. The beta chain is required for initiation of replication as well as for processivity of DNA replication. This Mycolicibacterium smegmatis (strain ATCC 700084 / mc(2)155) (Mycobacterium smegmatis) protein is Beta sliding clamp (dnaN).